The primary structure comprises 93 residues: Large ribosomal subunit protein uL23 (93 aa).

The protein belongs to the universal ribosomal protein uL23 family. Part of the 50S ribosomal subunit. Contacts protein L29, and trigger factor when it is bound to the ribosome.

Functionally, one of the early assembly proteins it binds 23S rRNA. One of the proteins that surrounds the polypeptide exit tunnel on the outside of the ribosome. Forms the main docking site for trigger factor binding to the ribosome. The protein is Large ribosomal subunit protein uL23 of Campylobacter jejuni subsp. jejuni serotype O:2 (strain ATCC 700819 / NCTC 11168).